Here is a 601-residue protein sequence, read N- to C-terminus: Elongation factor 4 (601 aa).

Residues 6 to 188 (KFTRNFSIIA…AICYLLPPPV (183 aa)) enclose the tr-type G domain. GTP is bound by residues 18-23 (DHGKST) and 135-138 (NKID).

The protein belongs to the TRAFAC class translation factor GTPase superfamily. Classic translation factor GTPase family. LepA subfamily.

It is found in the cell inner membrane. The enzyme catalyses GTP + H2O = GDP + phosphate + H(+). Its function is as follows. Required for accurate and efficient protein synthesis under certain stress conditions. May act as a fidelity factor of the translation reaction, by catalyzing a one-codon backward translocation of tRNAs on improperly translocated ribosomes. Back-translocation proceeds from a post-translocation (POST) complex to a pre-translocation (PRE) complex, thus giving elongation factor G a second chance to translocate the tRNAs correctly. Binds to ribosomes in a GTP-dependent manner. This is Elongation factor 4 from Leptospira biflexa serovar Patoc (strain Patoc 1 / Ames).